The primary structure comprises 98 residues: UPF0175 protein VNG_0066H (98 aa).

Belongs to the UPF0175 family.

In Halobacterium salinarum (strain ATCC 700922 / JCM 11081 / NRC-1) (Halobacterium halobium), this protein is UPF0175 protein VNG_0066H.